A 155-amino-acid polypeptide reads, in one-letter code: Transcriptional repressor NrdR (155 aa).

The segment at 3–34 is a zinc-finger region; sequence CPFCQHDDTQVLDTRVSEEGDSIRRRRRCTSC. The ATP-cone domain maps to 49 to 139; the sequence is PVVVKKNGSR…VYKSFEDVAE (91 aa).

Belongs to the NrdR family. Zn(2+) serves as cofactor.

Its function is as follows. Negatively regulates transcription of bacterial ribonucleotide reductase nrd genes and operons by binding to NrdR-boxes. The chain is Transcriptional repressor NrdR from Janthinobacterium sp. (strain Marseille) (Minibacterium massiliensis).